We begin with the raw amino-acid sequence, 417 residues long: Serine/threonine-protein kinase SBK1 (417 aa).

Residues 53-318 (YELVRELGKG…VFRFLKHELT (266 aa)) enclose the Protein kinase domain. ATP contacts are provided by residues 59 to 67 (LGKGTYGKV) and K82. The active-site Proton acceptor is D174. The segment at 321 to 405 (LRRRPSHRAR…TDGRTDKSKG (85 aa)) is disordered. Residues 363-382 (PSPPSVGPVVPVPVPVPVPV) show a composition bias toward pro residues.

This sequence belongs to the protein kinase superfamily. Ser/Thr protein kinase family.

It localises to the cytoplasm. The enzyme catalyses L-seryl-[protein] + ATP = O-phospho-L-seryl-[protein] + ADP + H(+). It carries out the reaction L-threonyl-[protein] + ATP = O-phospho-L-threonyl-[protein] + ADP + H(+). Its function is as follows. May be involved in signal-transduction pathways related to the control of brain development. This is Serine/threonine-protein kinase SBK1 (Sbk1) from Mus musculus (Mouse).